A 553-amino-acid chain; its full sequence is Transcriptional regulator HilA (553 aa).

Positions 11-107 (NKKFVFDDFI…LYGQGYRFNR (97 aa)) form a DNA-binding region, ompR/PhoB-type. Asp62 is modified (4-aspartylphosphate). The TPR repeat unit spans residues 372–405 (ADIKYYYGWNLFMAGQLEEALQTINECLKLDPTR).

Functionally, the main transcriptional regulator of the Salmonella pathogenicity island 1 (SPI1) gene expression. Activates the expression of invasion genes by a direct action at their promoters and also indirectly by increasing the level of invF. Also binds upstream of prgH and directly activates the expression of prgHIJK operon. This is Transcriptional regulator HilA (hilA) from Salmonella paratyphi A (strain ATCC 9150 / SARB42).